We begin with the raw amino-acid sequence, 355 residues long: Uroporphyrinogen decarboxylase (355 aa).

Substrate is bound by residues 23–27 (RQAGR), Asp72, Tyr148, Ser203, and His321.

This sequence belongs to the uroporphyrinogen decarboxylase family. In terms of assembly, homodimer.

It is found in the cytoplasm. It carries out the reaction uroporphyrinogen III + 4 H(+) = coproporphyrinogen III + 4 CO2. It functions in the pathway porphyrin-containing compound metabolism; protoporphyrin-IX biosynthesis; coproporphyrinogen-III from 5-aminolevulinate: step 4/4. Catalyzes the decarboxylation of four acetate groups of uroporphyrinogen-III to yield coproporphyrinogen-III. The protein is Uroporphyrinogen decarboxylase of Chloroflexus aurantiacus (strain ATCC 29366 / DSM 635 / J-10-fl).